Reading from the N-terminus, the 36-residue chain is Photosystem I reaction center subunit VIII (36 aa).

Residues 9-29 form a helical membrane-spanning segment; it reads ILVPLVGLVFPAITMVSLFLY.

The protein belongs to the PsaI family.

Its subcellular location is the plastid. It is found in the chloroplast thylakoid membrane. In terms of biological role, may help in the organization of the PsaL subunit. In Zygnema circumcarinatum (Green alga), this protein is Photosystem I reaction center subunit VIII.